Here is a 131-residue protein sequence, read N- to C-terminus: Peptide methionine sulfoxide reductase MsrB (131 aa).

Residues 8 to 130 (LDEWRSMLDP…NSVCIDLRPR (123 aa)) form the MsrB domain. Zn(2+)-binding residues include cysteine 47, cysteine 50, cysteine 96, and cysteine 99. Catalysis depends on cysteine 119, which acts as the Nucleophile.

Belongs to the MsrB Met sulfoxide reductase family. It depends on Zn(2+) as a cofactor.

The enzyme catalyses L-methionyl-[protein] + [thioredoxin]-disulfide + H2O = L-methionyl-(R)-S-oxide-[protein] + [thioredoxin]-dithiol. The chain is Peptide methionine sulfoxide reductase MsrB from Pseudomonas putida (strain ATCC 47054 / DSM 6125 / CFBP 8728 / NCIMB 11950 / KT2440).